A 460-amino-acid polypeptide reads, in one-letter code: Argininosuccinate lyase (460 aa).

The protein belongs to the lyase 1 family. Argininosuccinate lyase subfamily.

The protein resides in the cytoplasm. It carries out the reaction 2-(N(omega)-L-arginino)succinate = fumarate + L-arginine. It functions in the pathway amino-acid biosynthesis; L-arginine biosynthesis; L-arginine from L-ornithine and carbamoyl phosphate: step 3/3. This chain is Argininosuccinate lyase, found in Mannheimia succiniciproducens (strain KCTC 0769BP / MBEL55E).